We begin with the raw amino-acid sequence, 124 residues long: Putative transmembrane protein FLJ36131 (124 aa).

Topologically, residues 1-2 are cytoplasmic; the sequence is MY. Residues 3–23 form a helical membrane-spanning segment; the sequence is VSISFLLGLSHLVLCCLLTFI. Over 24–124 the chain is Extracellular; that stretch reads VNFYLPPESI…LLTTTSYSVS (101 aa). A glycan (N-linked (GlcNAc...) asparagine) is linked at Asn-41.

It is found in the membrane. This is Putative transmembrane protein FLJ36131 from Homo sapiens (Human).